Reading from the N-terminus, the 474-residue chain is tRNA-2-methylthio-N(6)-dimethylallyladenosine synthase (474 aa).

The region spanning 3-120 (KKLHIKTWGC…LPEMIDQIRD (118 aa)) is the MTTase N-terminal domain. [4Fe-4S] cluster is bound by residues C12, C49, C83, C157, C161, and C164. Residues 143–375 (RADGPSAFVS…QDRITQQAMR (233 aa)) enclose the Radical SAM core domain. Residues 378–441 (RQMLGTVQRI…TNSLRGTFVR (64 aa)) form the TRAM domain.

This sequence belongs to the methylthiotransferase family. MiaB subfamily. Monomer. It depends on [4Fe-4S] cluster as a cofactor.

It localises to the cytoplasm. It carries out the reaction N(6)-dimethylallyladenosine(37) in tRNA + (sulfur carrier)-SH + AH2 + 2 S-adenosyl-L-methionine = 2-methylsulfanyl-N(6)-dimethylallyladenosine(37) in tRNA + (sulfur carrier)-H + 5'-deoxyadenosine + L-methionine + A + S-adenosyl-L-homocysteine + 2 H(+). Catalyzes the methylthiolation of N6-(dimethylallyl)adenosine (i(6)A), leading to the formation of 2-methylthio-N6-(dimethylallyl)adenosine (ms(2)i(6)A) at position 37 in tRNAs that read codons beginning with uridine. The chain is tRNA-2-methylthio-N(6)-dimethylallyladenosine synthase from Shewanella sediminis (strain HAW-EB3).